Here is a 295-residue protein sequence, read N- to C-terminus: Zinc finger CCCH domain-containing protein 44 (295 aa).

The segment at 1–31 is disordered; it reads MEAGGGKRAAPEGTNGAAKRARASESSQVGV. 2 consecutive C3H1-type zinc fingers follow at residues 32–60 and 98–126; these read GSKLKPCTKFFSTSGCPFGSSCHFLHNFP and SVKTRMCNKYNTAEGCKWGSKCHFAHGER. The KH domain maps to 166–230; it reads SATAKISVDA…DQIKHASAMV (65 aa). The C3H1-type 3 zinc-finger motif lies at 259–286; that stretch reads NFKTKLCENFNKGSCTFGDRCHFAHGES.

This Oryza sativa subsp. japonica (Rice) protein is Zinc finger CCCH domain-containing protein 44.